The primary structure comprises 194 residues: Large ribosomal subunit protein eL15 (194 aa).

Residues 164–194 (SAGKKGRGLRNKGIGAEKVRPSIRAHGRRGK) form a disordered region. Basic residues predominate over residues 184 to 194 (PSIRAHGRRGK).

Belongs to the eukaryotic ribosomal protein eL15 family.

The chain is Large ribosomal subunit protein eL15 (rpl15e) from Methanocaldococcus jannaschii (strain ATCC 43067 / DSM 2661 / JAL-1 / JCM 10045 / NBRC 100440) (Methanococcus jannaschii).